The chain runs to 415 residues: MKHLPVQDKQVFNAIKDERKRQQTKIELIASENFVTEAVMEAQGSVLTNKYAEGYPGKRYYGGCEHVDVVEDIARDRAKEIFGAEHVNVQPHSGAQANMAVYFTILEHGDTVLGMNLSHGGHLTHGSPVNFSGVQYNFVEYGVDKDTQYIDYEDVREKALAHKPKLIVAGASAYPRTIDFKKFREIADEVGAYFMVDMAHIAGLVAAGLHPNPVPYADFVTTTTHKTLRGPRGGMILCREEFGKKIDKSIFPGIQGGPLMHVIAAKAVSFGEVLEDDFKTYAQNVISNAKSLAESLNKEGIQLVSGGTDNHLVLVDLRSLGLTGKVAEHVLDEIGITSNKNAIPYDPEKPFVTSGIRLGTAAVTSRGFDGDALEEVGAIIGLALKHHEDEAKLEEARQRVSALTEKFPLYKELGY.

(6S)-5,6,7,8-tetrahydrofolate-binding positions include Leu117 and 121–123 (GHL). Lys226 bears the N6-(pyridoxal phosphate)lysine mark. Glu241 contributes to the (6S)-5,6,7,8-tetrahydrofolate binding site.

It belongs to the SHMT family. In terms of assembly, homodimer. The cofactor is pyridoxal 5'-phosphate.

The protein localises to the cytoplasm. The catalysed reaction is (6R)-5,10-methylene-5,6,7,8-tetrahydrofolate + glycine + H2O = (6S)-5,6,7,8-tetrahydrofolate + L-serine. Its pathway is one-carbon metabolism; tetrahydrofolate interconversion. It participates in amino-acid biosynthesis; glycine biosynthesis; glycine from L-serine: step 1/1. Its function is as follows. Catalyzes the reversible interconversion of serine and glycine with tetrahydrofolate (THF) serving as the one-carbon carrier. This reaction serves as the major source of one-carbon groups required for the biosynthesis of purines, thymidylate, methionine, and other important biomolecules. Also exhibits THF-independent aldolase activity toward beta-hydroxyamino acids, producing glycine and aldehydes, via a retro-aldol mechanism. In Bacillus velezensis (strain DSM 23117 / BGSC 10A6 / LMG 26770 / FZB42) (Bacillus amyloliquefaciens subsp. plantarum), this protein is Serine hydroxymethyltransferase.